We begin with the raw amino-acid sequence, 149 residues long: Transcriptional repressor NrdR (149 aa).

A zinc finger spans residues 3–34 (CPFCSATDTKVIDSRLVSDGHQVRRRRQCLAC). An ATP-cone domain is found at 49 to 139 (PKVIKSNGNR…VYRSFEDIKE (91 aa)).

It belongs to the NrdR family. The cofactor is Zn(2+).

Negatively regulates transcription of bacterial ribonucleotide reductase nrd genes and operons by binding to NrdR-boxes. The polypeptide is Transcriptional repressor NrdR (Aliivibrio salmonicida (strain LFI1238) (Vibrio salmonicida (strain LFI1238))).